The primary structure comprises 897 residues: Zinc finger protein zas1 (897 aa).

2 consecutive C2H2-type zinc fingers follow at residues 26-50 (FYCT…ERTH) and 56-79 (FSCS…QQMH). A C2H2-type 3; atypical zinc finger spans residues 93 to 119 (ASCFLGFCVLAHDYVNLINARHFMIEH).

Its subcellular location is the nucleus. In Schizosaccharomyces pombe (strain 972 / ATCC 24843) (Fission yeast), this protein is Zinc finger protein zas1 (zas1).